The following is a 222-amino-acid chain: MVIAIDGPSASGKSSIAKALGMRLGFKFISSGYFYRIITLIAQRFSLNEYDLLSESKILELVSQNDIKFNGFDFLLNGTNVISHILNERIDFQVSLYSSYIGVRNIVNKKLREIVKLKDDNYIIEGRDITTVVFPEAEVKIYLDASVKVRALRRYNQRSDNVTLNELEQALERRDEIDQNKEYGKLKLDKEVFYIDTSYKCLDDVCNIIIKTFNLKKKVIER.

Residue 7–15 (GPSASGKSS) coordinates ATP.

This sequence belongs to the cytidylate kinase family. Type 1 subfamily.

The protein resides in the cytoplasm. It carries out the reaction CMP + ATP = CDP + ADP. It catalyses the reaction dCMP + ATP = dCDP + ADP. This is Cytidylate kinase from Borrelia turicatae (strain 91E135).